Reading from the N-terminus, the 315-residue chain is Methionyl-tRNA formyltransferase (315 aa).

(6S)-5,6,7,8-tetrahydrofolate is bound at residue 113–116 (SLLP).

The protein belongs to the Fmt family.

It carries out the reaction L-methionyl-tRNA(fMet) + (6R)-10-formyltetrahydrofolate = N-formyl-L-methionyl-tRNA(fMet) + (6S)-5,6,7,8-tetrahydrofolate + H(+). Functionally, attaches a formyl group to the free amino group of methionyl-tRNA(fMet). The formyl group appears to play a dual role in the initiator identity of N-formylmethionyl-tRNA by promoting its recognition by IF2 and preventing the misappropriation of this tRNA by the elongation apparatus. The chain is Methionyl-tRNA formyltransferase from Enterobacter sp. (strain 638).